Consider the following 475-residue polypeptide: Ras-GEF domain-containing family member 1B-B (475 aa).

Polar residues predominate over residues 1 to 19 (MPQTTPYSSKFNPSAYSSS). Residues 1–25 (MPQTTPYSSKFNPSAYSSSHSHRQP) are disordered. Positions 36 to 166 (RDNKLVSGSL…LIQRLLRKLT (131 aa)) constitute an N-terminal Ras-GEF domain. Positions 209–456 (DPFIFAQQLT…QLASYESEGP (248 aa)) constitute a Ras-GEF domain. A disordered region spans residues 452–475 (ESEGPENNLERDTRRSLRSSLSRM).

In terms of biological role, guanine nucleotide exchange factor (GEF) for Ras family proteins. This is Ras-GEF domain-containing family member 1B-B from Danio rerio (Zebrafish).